A 371-amino-acid polypeptide reads, in one-letter code: Leucine-rich repeat-containing protein 58 (371 aa).

Ser-24 carries the phosphoserine modification. LRR repeat units follow at residues 45-66, 69-91, 92-113, 121-143, 144-166, 167-189, 190-211, 213-234, and 236-256; these read ALLRLLLPHNRLVSLPRALGSG, HLQLLDVSGNALTALGPELLALR, GLRTLLAKNNRLGGPSALPKGL, SLQVLNLSGNCFQEVPASLLELR, ALQTLSLGGNQLQSIPAEIENLQ, SLECLYLGGNFIKEIPPELGNLP, SLNYLVLCDNKIQSIPPQLSQL, SLRSLSLHNNLLTYLPREILNL, and HLEELSLRGNPLVVRFVRDLT. Residues 340–351 show a composition bias toward low complexity; the sequence is SSASHSSTSQSE. The tract at residues 340-361 is disordered; the sequence is SSASHSSTSQSESDSEDEASVA.

The polypeptide is Leucine-rich repeat-containing protein 58 (LRRC58) (Homo sapiens (Human)).